Consider the following 338-residue polypeptide: Tetraacyldisaccharide 4'-kinase (338 aa).

Position 51 to 58 (51 to 58 (HVGGAGKT)) interacts with ATP.

It belongs to the LpxK family.

It carries out the reaction a lipid A disaccharide + ATP = a lipid IVA + ADP + H(+). It participates in glycolipid biosynthesis; lipid IV(A) biosynthesis; lipid IV(A) from (3R)-3-hydroxytetradecanoyl-[acyl-carrier-protein] and UDP-N-acetyl-alpha-D-glucosamine: step 6/6. Its function is as follows. Transfers the gamma-phosphate of ATP to the 4'-position of a tetraacyldisaccharide 1-phosphate intermediate (termed DS-1-P) to form tetraacyldisaccharide 1,4'-bis-phosphate (lipid IVA). This is Tetraacyldisaccharide 4'-kinase from Bradyrhizobium diazoefficiens (strain JCM 10833 / BCRC 13528 / IAM 13628 / NBRC 14792 / USDA 110).